A 310-amino-acid polypeptide reads, in one-letter code: Methionyl-tRNA formyltransferase (310 aa).

Residue 111 to 114 (SLLP) participates in (6S)-5,6,7,8-tetrahydrofolate binding.

Belongs to the Fmt family.

The enzyme catalyses L-methionyl-tRNA(fMet) + (6R)-10-formyltetrahydrofolate = N-formyl-L-methionyl-tRNA(fMet) + (6S)-5,6,7,8-tetrahydrofolate + H(+). In terms of biological role, attaches a formyl group to the free amino group of methionyl-tRNA(fMet). The formyl group appears to play a dual role in the initiator identity of N-formylmethionyl-tRNA by promoting its recognition by IF2 and preventing the misappropriation of this tRNA by the elongation apparatus. This is Methionyl-tRNA formyltransferase from Rhodopseudomonas palustris (strain ATCC BAA-98 / CGA009).